Consider the following 354-residue polypeptide: Uroporphyrinogen decarboxylase (354 aa).

Substrate is bound by residues 30-34 (RQAGR), Asp-79, Tyr-154, Ser-209, and His-333.

It belongs to the uroporphyrinogen decarboxylase family. As to quaternary structure, homodimer.

Its subcellular location is the cytoplasm. It catalyses the reaction uroporphyrinogen III + 4 H(+) = coproporphyrinogen III + 4 CO2. It participates in porphyrin-containing compound metabolism; protoporphyrin-IX biosynthesis; coproporphyrinogen-III from 5-aminolevulinate: step 4/4. Catalyzes the decarboxylation of four acetate groups of uroporphyrinogen-III to yield coproporphyrinogen-III. The protein is Uroporphyrinogen decarboxylase of Mycolicibacterium vanbaalenii (strain DSM 7251 / JCM 13017 / BCRC 16820 / KCTC 9966 / NRRL B-24157 / PYR-1) (Mycobacterium vanbaalenii).